Reading from the N-terminus, the 120-residue chain is NAD(P)H-quinone oxidoreductase subunit 3, chloroplastic (120 aa).

The next 3 helical transmembrane spans lie at 9 to 29 (IFWAFLIISSAIPVLAFLISG), 64 to 84 (MFALVFVVFDVETVFLYPWAM), and 88 to 108 (VLGVSAFIEAFIFVLILILGL).

Belongs to the complex I subunit 3 family. As to quaternary structure, NDH is composed of at least 16 different subunits, 5 of which are encoded in the nucleus.

It localises to the plastid. Its subcellular location is the chloroplast thylakoid membrane. The catalysed reaction is a plastoquinone + NADH + (n+1) H(+)(in) = a plastoquinol + NAD(+) + n H(+)(out). The enzyme catalyses a plastoquinone + NADPH + (n+1) H(+)(in) = a plastoquinol + NADP(+) + n H(+)(out). Functionally, NDH shuttles electrons from NAD(P)H:plastoquinone, via FMN and iron-sulfur (Fe-S) centers, to quinones in the photosynthetic chain and possibly in a chloroplast respiratory chain. The immediate electron acceptor for the enzyme in this species is believed to be plastoquinone. Couples the redox reaction to proton translocation, and thus conserves the redox energy in a proton gradient. The polypeptide is NAD(P)H-quinone oxidoreductase subunit 3, chloroplastic (Capsella bursa-pastoris (Shepherd's purse)).